Reading from the N-terminus, the 244-residue chain is MFRRKLTALDYHNPSGFNCKDETEFRNFIVWLEDQKIRHYKIEDRGNLRNIHSSDWPKFFEKYLKDVNCPFKIQDRQEAIDWLLGLAVRLEYGDNAEKYKDLVPDNRKNTDNAAKNAEPLINLDVNNPDFKAGVMALANLLQIQRHDDYLVMLKAIRILVQERLTQDAVAKANQTKEGLPVALEKHILGFDTGDAVLNEAAQILRLLHIEELRELQTKINEAIVAVQAIIADPKTDHRLGKVGR.

Lys20, Lys62, and Lys98 each carry N6-acetyllysine.

The protein belongs to the RTRAF family. In terms of assembly, homodimer. Interacts with FAM98A (via N- and C-terminus). Interacts with NIN; which may prevent phosphorylation of NIN. Interacts with POLR2A. Component of a tRNA-splicing ligase complex.

It localises to the nucleus. It is found in the cytoplasm. Its subcellular location is the cytosol. The protein localises to the perinuclear region. The protein resides in the cytoskeleton. It localises to the microtubule organizing center. It is found in the centrosome. Its function is as follows. RNA-binding protein involved in modulation of mRNA transcription by Polymerase II. Component of the tRNA-splicing ligase complex and is required for tRNA ligation. May be required for RNA transport. This is RNA transcription, translation and transport factor protein from Mus musculus (Mouse).